The chain runs to 378 residues: UDP-4-amino-4-deoxy-L-arabinose--oxoglutarate aminotransferase (378 aa).

Lys182 carries the N6-(pyridoxal phosphate)lysine modification.

This sequence belongs to the DegT/DnrJ/EryC1 family. ArnB subfamily. Homodimer. The cofactor is pyridoxal 5'-phosphate.

It catalyses the reaction UDP-4-amino-4-deoxy-beta-L-arabinose + 2-oxoglutarate = UDP-beta-L-threo-pentopyranos-4-ulose + L-glutamate. Its pathway is nucleotide-sugar biosynthesis; UDP-4-deoxy-4-formamido-beta-L-arabinose biosynthesis; UDP-4-deoxy-4-formamido-beta-L-arabinose from UDP-alpha-D-glucuronate: step 2/3. It participates in bacterial outer membrane biogenesis; lipopolysaccharide biosynthesis. Its function is as follows. Catalyzes the conversion of UDP-4-keto-arabinose (UDP-Ara4O) to UDP-4-amino-4-deoxy-L-arabinose (UDP-L-Ara4N). The modified arabinose is attached to lipid A and is required for resistance to polymyxin and cationic antimicrobial peptides. This chain is UDP-4-amino-4-deoxy-L-arabinose--oxoglutarate aminotransferase, found in Aeromonas salmonicida (strain A449).